The chain runs to 361 residues: Queuine tRNA-ribosyltransferase (361 aa).

Aspartate 92 (proton acceptor) is an active-site residue. Residues aspartate 92–phenylalanine 96, aspartate 146, glutamine 189, and glycine 216 each bind substrate. The segment at glycine 247–aspartate 253 is RNA binding. Catalysis depends on aspartate 266, which acts as the Nucleophile. The interval threonine 271–arginine 275 is RNA binding; important for wobble base 34 recognition. Residues cysteine 304, cysteine 306, cysteine 309, and histidine 335 each coordinate Zn(2+).

Belongs to the queuine tRNA-ribosyltransferase family. Homodimer. Within each dimer, one monomer is responsible for RNA recognition and catalysis, while the other monomer binds to the replacement base PreQ1. Requires Zn(2+) as cofactor.

It carries out the reaction 7-aminomethyl-7-carbaguanine + guanosine(34) in tRNA = 7-aminomethyl-7-carbaguanosine(34) in tRNA + guanine. Its pathway is tRNA modification; tRNA-queuosine biosynthesis. Functionally, catalyzes the base-exchange of a guanine (G) residue with the queuine precursor 7-aminomethyl-7-deazaguanine (PreQ1) at position 34 (anticodon wobble position) in tRNAs with GU(N) anticodons (tRNA-Asp, -Asn, -His and -Tyr). Catalysis occurs through a double-displacement mechanism. The nucleophile active site attacks the C1' of nucleotide 34 to detach the guanine base from the RNA, forming a covalent enzyme-RNA intermediate. The proton acceptor active site deprotonates the incoming PreQ1, allowing a nucleophilic attack on the C1' of the ribose to form the product. After dissociation, two additional enzymatic reactions on the tRNA convert PreQ1 to queuine (Q), resulting in the hypermodified nucleoside queuosine (7-(((4,5-cis-dihydroxy-2-cyclopenten-1-yl)amino)methyl)-7-deazaguanosine). The sequence is that of Queuine tRNA-ribosyltransferase from Rickettsia akari (strain Hartford).